A 284-amino-acid polypeptide reads, in one-letter code: 2-dehydro-3-deoxyphosphooctonate aldolase (284 aa).

It belongs to the KdsA family.

Its subcellular location is the cytoplasm. It catalyses the reaction D-arabinose 5-phosphate + phosphoenolpyruvate + H2O = 3-deoxy-alpha-D-manno-2-octulosonate-8-phosphate + phosphate. It participates in carbohydrate biosynthesis; 3-deoxy-D-manno-octulosonate biosynthesis; 3-deoxy-D-manno-octulosonate from D-ribulose 5-phosphate: step 2/3. Its pathway is bacterial outer membrane biogenesis; lipopolysaccharide biosynthesis. The chain is 2-dehydro-3-deoxyphosphooctonate aldolase from Burkholderia cenocepacia (strain HI2424).